The primary structure comprises 197 residues: Xanthine phosphoribosyltransferase (197 aa).

Xanthine is bound by residues leucine 20 and asparagine 27. 5-phospho-alpha-D-ribose 1-diphosphate is bound at residue 128 to 132 (ANGQA). Lysine 156 is a xanthine binding site.

Belongs to the purine/pyrimidine phosphoribosyltransferase family. Xpt subfamily. In terms of assembly, homodimer.

It localises to the cytoplasm. The enzyme catalyses XMP + diphosphate = xanthine + 5-phospho-alpha-D-ribose 1-diphosphate. It participates in purine metabolism; XMP biosynthesis via salvage pathway; XMP from xanthine: step 1/1. In terms of biological role, converts the preformed base xanthine, a product of nucleic acid breakdown, to xanthosine 5'-monophosphate (XMP), so it can be reused for RNA or DNA synthesis. The chain is Xanthine phosphoribosyltransferase from Bacillus anthracis (strain A0248).